Here is a 348-residue protein sequence, read N- to C-terminus: MKNTFNTSNAFASAYSFWGYVIGFLLSTSNRLYIGWFGILMFPLISLATVAYIAAFIFAPPVDIDGIREPVAGALLYGNNIISGAVIPSSNAIGVHFYPVWEALGFDEWLYNGGTYQFVVLHFIFGAGAWMGREWEFAFRLGMRPWIFVAFSAPLVASCAVFVVYPIGQGSFSDGMPLGISGTFNFMLVFQAEHNILMHPFHILGVAGVFGGSLFSAMHGSLVTSSLLAETAGDLSLNVGYNFGQEDETYSISAAHGYFGRLIFQYASFNNSRSLHFFLAAWPVIGIWFTALGVSTMAFNLNGLNFNQSIIDSSGHLINSWADIVNRADLGMEVMHERNAHNFPLDLA.

The next 3 membrane-spanning stretches (helical) occupy residues Tyr33–Val50, His122–Phe137, and Trp146–Ala160. Position 122 (His122) interacts with chlorophyll a. Trp130 contacts pheophytin a. Positions 174 and 193 each coordinate [CaMn4O5] cluster. Residues Phe201–Leu222 traverse the membrane as a helical segment. His202 contacts chlorophyll a. A quinone-binding positions include His219 and Ser268–Phe269. A Fe cation-binding site is contributed by His219. His276 is a binding site for Fe cation. The helical transmembrane segment at Phe278–Leu292 threads the bilayer. [CaMn4O5] cluster contacts are provided by His336, Glu337, Asp346, and Ala348.

Belongs to the reaction center PufL/M/PsbA/D family. In terms of assembly, PSII is composed of 1 copy each of membrane proteins PsbA, PsbB, PsbC, PsbD, PsbE, PsbF, PsbH, PsbI, PsbJ, PsbK, PsbL, PsbM, PsbT, PsbX, PsbY, PsbZ, Psb30/Ycf12, at least 3 peripheral proteins of the oxygen-evolving complex and a large number of cofactors. It forms dimeric complexes. Requires The D1/D2 heterodimer binds P680, chlorophylls that are the primary electron donor of PSII, and subsequent electron acceptors. It shares a non-heme iron and each subunit binds pheophytin, quinone, additional chlorophylls, carotenoids and lipids. D1 provides most of the ligands for the Mn4-Ca-O5 cluster of the oxygen-evolving complex (OEC). There is also a Cl(-1) ion associated with D1 and D2, which is required for oxygen evolution. The PSII complex binds additional chlorophylls, carotenoids and specific lipids. as cofactor. In terms of processing, tyr-165 forms a radical intermediate that is referred to as redox-active TyrZ, YZ or Y-Z.

Its subcellular location is the plastid. The protein resides in the chloroplast thylakoid membrane. It catalyses the reaction 2 a plastoquinone + 4 hnu + 2 H2O = 2 a plastoquinol + O2. Its function is as follows. Photosystem II (PSII) is a light-driven water:plastoquinone oxidoreductase that uses light energy to abstract electrons from H(2)O, generating O(2) and a proton gradient subsequently used for ATP formation. It consists of a core antenna complex that captures photons, and an electron transfer chain that converts photonic excitation into a charge separation. The D1/D2 (PsbA/PsbD) reaction center heterodimer binds P680, the primary electron donor of PSII as well as several subsequent electron acceptors. The polypeptide is Photosystem II protein D1 (Heterocapsa rotundata (Dinoflagellate)).